Here is a 64-residue protein sequence, read N- to C-terminus: Large ribosomal subunit protein bL33 (64 aa).

Belongs to the bacterial ribosomal protein bL33 family.

This Synechococcus elongatus (strain ATCC 33912 / PCC 7942 / FACHB-805) (Anacystis nidulans R2) protein is Large ribosomal subunit protein bL33.